The sequence spans 148 residues: SsrA-binding protein (148 aa).

The interval 123–148 (KLHDKRETEKKRDWEREKARIMRSAT) is disordered. A compositionally biased stretch (basic and acidic residues) spans 126-142 (DKRETEKKRDWEREKAR).

This sequence belongs to the SmpB family.

Its subcellular location is the cytoplasm. Required for rescue of stalled ribosomes mediated by trans-translation. Binds to transfer-messenger RNA (tmRNA), required for stable association of tmRNA with ribosomes. tmRNA and SmpB together mimic tRNA shape, replacing the anticodon stem-loop with SmpB. tmRNA is encoded by the ssrA gene; the 2 termini fold to resemble tRNA(Ala) and it encodes a 'tag peptide', a short internal open reading frame. During trans-translation Ala-aminoacylated tmRNA acts like a tRNA, entering the A-site of stalled ribosomes, displacing the stalled mRNA. The ribosome then switches to translate the ORF on the tmRNA; the nascent peptide is terminated with the 'tag peptide' encoded by the tmRNA and targeted for degradation. The ribosome is freed to recommence translation, which seems to be the essential function of trans-translation. This is SsrA-binding protein from Burkholderia pseudomallei (strain 1710b).